The sequence spans 176 residues: Large ribosomal subunit protein uL16 (176 aa).

This sequence belongs to the universal ribosomal protein uL16 family.

This Halorubrum lacusprofundi (strain ATCC 49239 / DSM 5036 / JCM 8891 / ACAM 34) protein is Large ribosomal subunit protein uL16.